The following is a 337-amino-acid chain: MHTGTTLTQFIIEEQRRTAGATGDFTSLLNDVVTACKAISNAVNKGALLGVMGALESENVQGETQKKLDVITNDIMIRSNEWAGHLAGMASEEMDDVYAIPGQYPLGKYLLVFDPLDGSSNVDVNISVGTIFSILKAPVAGRAAKAEDFLQAGTKQVCAGYAIYGSSTMLVLTFGHGTNGFTLDRDVGEFVLTHPAMKIPTETKEFAINASNMRFWEKPVQRYVDECLAGKTGPRGKDFNMRWVASMVAEVHRILTRGGIFMYPKDTKDPSKAGKLRLMYEANPMAFIVEQAGGAATTGYQRILDIAPEGLHQRVPVILGSKTEVDTVTGYHHEKAA.

Mg(2+) is bound by residues Glu92, Asp114, Leu116, and Asp117. Residues 117–120 (DGSS), Asn209, and Lys275 each bind substrate. Mg(2+) is bound at residue Glu281.

This sequence belongs to the FBPase class 1 family. Homotetramer. Mg(2+) serves as cofactor.

It localises to the cytoplasm. The enzyme catalyses beta-D-fructose 1,6-bisphosphate + H2O = beta-D-fructose 6-phosphate + phosphate. It participates in carbohydrate biosynthesis; gluconeogenesis. This is Fructose-1,6-bisphosphatase class 1 from Thiobacillus denitrificans (strain ATCC 25259 / T1).